Consider the following 235-residue polypeptide: Exotoxin type C (235 aa).

Residues 1–27 (MKKINIIKIVFIITVILISTISPIIKS) form the signal peptide. His194, His228, and Asp230 together coordinate Zn(2+).

The protein belongs to the staphylococcal/streptococcal toxin family.

Functionally, superantigen that acts as a causative agent of the symptoms associated with scarlet fever. Has been associated with streptococcal toxic shock-like disease and may play a role in the early events of rheumatic fever. Superantigens cross-link major histocompatibility complex (MHC) class II and T-cell receptor (TCR) molecules, resulting in an overstimulation of T-cells associated with a massive release of pyrogenic and inflammatory cytokines. The protein is Exotoxin type C (speC) of Streptococcus pyogenes serotype M1.